Consider the following 355-residue polypeptide: S-adenosylmethionine:tRNA ribosyltransferase-isomerase (355 aa).

The protein belongs to the QueA family. As to quaternary structure, monomer.

The protein localises to the cytoplasm. The catalysed reaction is 7-aminomethyl-7-carbaguanosine(34) in tRNA + S-adenosyl-L-methionine = epoxyqueuosine(34) in tRNA + adenine + L-methionine + 2 H(+). It functions in the pathway tRNA modification; tRNA-queuosine biosynthesis. Functionally, transfers and isomerizes the ribose moiety from AdoMet to the 7-aminomethyl group of 7-deazaguanine (preQ1-tRNA) to give epoxyqueuosine (oQ-tRNA). This is S-adenosylmethionine:tRNA ribosyltransferase-isomerase from Gluconacetobacter diazotrophicus (strain ATCC 49037 / DSM 5601 / CCUG 37298 / CIP 103539 / LMG 7603 / PAl5).